A 283-amino-acid chain; its full sequence is MSKFLSQAALNTLRNTRLGSRQLVRSFAGIASTRNHREPAHQEPGCGQALGRGLLQMRLPVAGRRSMFIQTQDTPNPDSLKFLPGVDVLGKGNTYDFPNGTTAHSSPLAKLLFRVEGVKGVFFGADFVTISKQEGAEWSLIKPEVFAVIMDFFASGLPVLHDAQPNADTEILEDDDETVMMIKELLDTRIRPTVQEDGGDIVFMGYEAGVVKLKMQGSCSSCPSSIVTLKNGVQNMLQFYIPEVESVEQVFDEADRMIDSEFERFEKNLKTLKQQEPSGAGPH.

The N-terminal 30 residues, 1–30 (MSKFLSQAALNTLRNTRLGSRQLVRSFAGI), are a transit peptide targeting the mitochondrion. Residues 182–250 (IKELLDTRIR…IPEVESVEQV (69 aa)) are nifU. Residues Cys-219 and Cys-222 each coordinate [4Fe-4S] cluster.

Belongs to the NifU family.

Its subcellular location is the mitochondrion. Functionally, molecular scaffold for [Fe-S] cluster assembly of mitochondrial iron-sulfur proteins. In Drosophila erecta (Fruit fly), this protein is NFU1 iron-sulfur cluster scaffold homolog, mitochondrial.